Reading from the N-terminus, the 331-residue chain is 6-phosphogluconolactonase (331 aa).

K287 carries the N6-acetyllysine modification.

It belongs to the cycloisomerase 2 family.

It carries out the reaction 6-phospho-D-glucono-1,5-lactone + H2O = 6-phospho-D-gluconate + H(+). The protein operates within carbohydrate degradation; pentose phosphate pathway; D-ribulose 5-phosphate from D-glucose 6-phosphate (oxidative stage): step 2/3. Its function is as follows. Catalyzes the hydrolysis of 6-phosphogluconolactone to 6-phosphogluconate. The chain is 6-phosphogluconolactonase from Shigella sonnei (strain Ss046).